Here is a 273-residue protein sequence, read N- to C-terminus: NH(3)-dependent NAD(+) synthetase (273 aa).

Residue 45–52 (GISGGQDS) coordinates ATP. Position 51 (Asp51) interacts with Mg(2+). Residue Arg139 coordinates deamido-NAD(+). Thr159 lines the ATP pocket. Residue Glu164 coordinates Mg(2+). Deamido-NAD(+) is bound by residues Lys172 and Asp179. ATP is bound by residues Lys188 and Thr210. 259 to 260 (HK) contacts deamido-NAD(+).

It belongs to the NAD synthetase family. In terms of assembly, homodimer.

It catalyses the reaction deamido-NAD(+) + NH4(+) + ATP = AMP + diphosphate + NAD(+) + H(+). It functions in the pathway cofactor biosynthesis; NAD(+) biosynthesis; NAD(+) from deamido-NAD(+) (ammonia route): step 1/1. Catalyzes the ATP-dependent amidation of deamido-NAD to form NAD. Uses ammonia as a nitrogen source. This chain is NH(3)-dependent NAD(+) synthetase, found in Bacillus pumilus (strain SAFR-032).